The primary structure comprises 221 residues: Urease accessory protein UreF (221 aa).

Belongs to the UreF family. UreD, UreF and UreG form a complex that acts as a GTP-hydrolysis-dependent molecular chaperone, activating the urease apoprotein by helping to assemble the nickel containing metallocenter of UreC. The UreE protein probably delivers the nickel.

The protein localises to the cytoplasm. Required for maturation of urease via the functional incorporation of the urease nickel metallocenter. The chain is Urease accessory protein UreF from Aliivibrio fischeri (strain ATCC 700601 / ES114) (Vibrio fischeri).